Reading from the N-terminus, the 352-residue chain is Speedy protein E16 (352 aa).

Residues 1–90 are disordered; that stretch reads MDRTETRFRK…EPEKELAPEP (90 aa). Residues 18–40 are compositionally biased toward polar residues; the sequence is ITTSRQPHPQNEQSPQRSTSGYS. A compositionally biased stretch (acidic residues) spans 76 to 90; sequence DESEEEPEKELAPEP.

Belongs to the Speedy/Ringo family.

The protein is Speedy protein E16 of Homo sapiens (Human).